A 627-amino-acid chain; its full sequence is Carnitine O-acetyltransferase (627 aa).

Positions 1–30 are excised as a propeptide; it reads MDRKQKQAEKARPYGLLKPAALGKIPGRFQ. Position 94 is an N6-succinyllysine (Lys-94). Lys-262 is modified (N6-acetyllysine; alternate). Lys-262 carries the N6-succinyllysine; alternate modification. The residue at position 269 (Lys-269) is an N6-acetyllysine. The Proton acceptor role is filled by His-344. CoA contacts are provided by residues Lys-420 and 424–431; that span reads KSEKISPD. Positions 453 and 455 each coordinate (R)-carnitine. Ser-457 is a binding site for CoA. Position 466 (Thr-466) interacts with (R)-carnitine. Gln-556 provides a ligand contact to CoA. A Microbody targeting signal motif is present at residues 625–627; it reads SKL.

The protein belongs to the carnitine/choline acetyltransferase family. In terms of assembly, monomer.

It localises to the endoplasmic reticulum. It is found in the peroxisome. The protein resides in the mitochondrion inner membrane. The catalysed reaction is (R)-carnitine + acetyl-CoA = O-acetyl-(R)-carnitine + CoA. It catalyses the reaction propanoyl-CoA + (R)-carnitine = O-propanoyl-(R)-carnitine + CoA. It carries out the reaction butanoyl-CoA + (R)-carnitine = O-butanoyl-(R)-carnitine + CoA. The enzyme catalyses hexanoyl-CoA + (R)-carnitine = O-hexanoyl-(R)-carnitine + CoA. The catalysed reaction is octanoyl-CoA + (R)-carnitine = O-octanoyl-(R)-carnitine + CoA. It catalyses the reaction decanoyl-CoA + (R)-carnitine = O-decanoyl-(R)-carnitine + CoA. It carries out the reaction 3-methylbutanoyl-CoA + (R)-carnitine = O-3-methylbutanoyl-(R)-carnitine + CoA. The enzyme catalyses 2-methylpropanoyl-CoA + (R)-carnitine = O-isobutanoyl-(R)-carnitine + CoA. The catalysed reaction is 2-methylbutanoyl-CoA + (R)-carnitine = O-2-methylbutanoyl-(R)-carnitine + CoA. It catalyses the reaction acetoacetyl-CoA + (R)-carnitine = O-3-oxobutanoyl-(R)-carnitine + CoA. It carries out the reaction 3-hydroxybutanoyl-CoA + (R)-carnitine = O-3-hydroxybutanoyl-(R)-carnitine + CoA. The enzyme catalyses 4,8-dimethylnonanoyl-CoA + (R)-carnitine = O-4,8-dimethylnonanoyl-(R)-carnitine + CoA. The catalysed reaction is 2,6-dimethylheptanoyl-CoA + (R)-carnitine = O-2,6-dimethylheptanoyl-(R)-carnitine + CoA. Functionally, catalyzes the reversible transfer of acyl groups from carnitine to coenzyme A (CoA) and regulates the acyl-CoA/CoA ratio. Also plays a crucial role in the transport of fatty acids for beta-oxidation. Responsible for the synthesis of short- and branched-chain acylcarnitines. Active towards some branched-chain amino acid oxidation pathway (BCAAO) intermediates. Trans-2-enoyl-CoAs and 2-methylacyl-CoAs are poor substrates. In Columba livia (Rock dove), this protein is Carnitine O-acetyltransferase (CRAT).